The chain runs to 532 residues: Flavin-containing monooxygenase 3 (532 aa).

FAD is bound by residues 9-13 (GAGVS), Glu32, 40-41 (LW), and 61-62 (NS). NADP(+) contacts are provided by residues 60–61 (SN) and 195–198 (SGCD). Ser401 is modified (phosphoserine). The helical transmembrane segment at 510-530 (FFFHWLKLFAIPILLIAVFLV) threads the bilayer.

Belongs to the FMO family. FAD is required as a cofactor. In terms of tissue distribution, liver.

It localises to the microsome membrane. It is found in the endoplasmic reticulum membrane. It carries out the reaction trimethylamine + NADPH + O2 = trimethylamine N-oxide + NADP(+) + H2O. The enzyme catalyses N,N-dimethylaniline + NADPH + O2 + H(+) = N,N-dimethylaniline N-oxide + NADP(+) + H2O. It catalyses the reaction hypotaurine + NADPH + O2 + H(+) = taurine + NADP(+) + H2O. The catalysed reaction is (S)-nicotine + NADPH + O2 = trans-(S)-nicotine N(1')-oxide + NADP(+) + H2O. It carries out the reaction albendazole + NADPH + O2 + H(+) = albendazole S-oxide + NADP(+) + H2O. Its function is as follows. Essential hepatic enzyme that catalyzes the oxygenation of a wide variety of nitrogen- and sulfur-containing compounds including drugs as well as dietary compounds. Plays an important role in the metabolism of trimethylamine (TMA), via the production of trimethylamine N-oxide (TMAO) metabolite. TMA is generated by the action of gut microbiota using dietary precursors such as choline, choline containing compounds, betaine or L-carnitine. By regulating TMAO concentration, FMO3 directly impacts both platelet responsiveness and rate of thrombus formation. The polypeptide is Flavin-containing monooxygenase 3 (FMO3) (Homo sapiens (Human)).